The chain runs to 252 residues: Agamous-like MADS-box protein AGL6 (252 aa).

In terms of domain architecture, MADS-box spans 3–57 (RGRVEMKRIENKINRQVTFSKRRNGLLKKAYELSVLCDAEVALIIFSSRGKLYEF). The region spanning 86-176 (TQSWCQEVTK…KIKFETEGHA (91 aa)) is the K-box domain. Residues 91-173 (QEVTKLKSKY…KQLKIKFETE (83 aa)) are a coiled coil.

In terms of assembly, forms a heterodimer with AGAMOUS. Interacts with AGL15 and AGL16. Preferentially expressed in flowers.

The protein resides in the nucleus. Functionally, probable transcription factor. Forms a heterodimer via the K-box domain with AG, that could be involved in genes regulation during floral meristem development. The chain is Agamous-like MADS-box protein AGL6 (AGL6) from Arabidopsis thaliana (Mouse-ear cress).